A 311-amino-acid chain; its full sequence is tRNA-cytidine(32) 2-sulfurtransferase (311 aa).

The short motif at 47 to 52 (SGGKDS) is the PP-loop motif element. Positions 122, 125, and 213 each coordinate [4Fe-4S] cluster.

This sequence belongs to the TtcA family. Homodimer. It depends on Mg(2+) as a cofactor. [4Fe-4S] cluster serves as cofactor.

It is found in the cytoplasm. It catalyses the reaction cytidine(32) in tRNA + S-sulfanyl-L-cysteinyl-[cysteine desulfurase] + AH2 + ATP = 2-thiocytidine(32) in tRNA + L-cysteinyl-[cysteine desulfurase] + A + AMP + diphosphate + H(+). It functions in the pathway tRNA modification. Its function is as follows. Catalyzes the ATP-dependent 2-thiolation of cytidine in position 32 of tRNA, to form 2-thiocytidine (s(2)C32). The sulfur atoms are provided by the cysteine/cysteine desulfurase (IscS) system. In Shigella dysenteriae serotype 1 (strain Sd197), this protein is tRNA-cytidine(32) 2-sulfurtransferase.